The primary structure comprises 741 residues: Phosphoribosylformylglycinamidine synthase subunit PurL (741 aa).

Histidine 53 is a catalytic residue. Positions 56 and 95 each coordinate ATP. Glutamate 97 contacts Mg(2+). Substrate-binding positions include 98–101 (SHNH) and arginine 120. The Proton acceptor role is filled by histidine 99. Aspartate 121 provides a ligand contact to Mg(2+). Glutamine 244 lines the substrate pocket. Residue aspartate 274 participates in Mg(2+) binding. Position 318–320 (318–320 (ESQ)) interacts with substrate. Residues aspartate 501 and glycine 538 each coordinate ATP. Residue asparagine 539 participates in Mg(2+) binding. Serine 541 contributes to the substrate binding site.

It belongs to the FGAMS family. In terms of assembly, monomer. Part of the FGAM synthase complex composed of 1 PurL, 1 PurQ and 2 PurS subunits.

The protein resides in the cytoplasm. The catalysed reaction is N(2)-formyl-N(1)-(5-phospho-beta-D-ribosyl)glycinamide + L-glutamine + ATP + H2O = 2-formamido-N(1)-(5-O-phospho-beta-D-ribosyl)acetamidine + L-glutamate + ADP + phosphate + H(+). It functions in the pathway purine metabolism; IMP biosynthesis via de novo pathway; 5-amino-1-(5-phospho-D-ribosyl)imidazole from N(2)-formyl-N(1)-(5-phospho-D-ribosyl)glycinamide: step 1/2. Its function is as follows. Part of the phosphoribosylformylglycinamidine synthase complex involved in the purines biosynthetic pathway. Catalyzes the ATP-dependent conversion of formylglycinamide ribonucleotide (FGAR) and glutamine to yield formylglycinamidine ribonucleotide (FGAM) and glutamate. The FGAM synthase complex is composed of three subunits. PurQ produces an ammonia molecule by converting glutamine to glutamate. PurL transfers the ammonia molecule to FGAR to form FGAM in an ATP-dependent manner. PurS interacts with PurQ and PurL and is thought to assist in the transfer of the ammonia molecule from PurQ to PurL. This Latilactobacillus sakei subsp. sakei (strain 23K) (Lactobacillus sakei subsp. sakei) protein is Phosphoribosylformylglycinamidine synthase subunit PurL.